The following is a 42-amino-acid chain: Lanthionine-containing peptide SapB precursor RamS (42 aa).

The propeptide occupies 1–21; that stretch reads MNLFDLQSMETPKEEAMGDVE. The segment at 1–21 is disordered; that stretch reads MNLFDLQSMETPKEEAMGDVE. Cross-links (lanthionine (Ser-Cys)) lie at residues 24-31 and 34-41; these read SRASLLLC and SSLSITTC. 2 positions are modified to 2,3-didehydroalanine (Ser): S27 and S37.

Belongs to the lanthionine-containing morphogen family. Maturation involves the enzymatic conversion of Ser into dehydrated AA and the formation of thioether bonds with cysteine, probably by RamC. This is followed by membrane translocation and cleavage of the modified precursor. The RamS precursor protein (detected by an anti-propeptide antibody and by a C-terminal His-tag) is detected from at least 16 hours post-germination; its apparent molecular weight decreases starting from about 34 hours, when its probable modifying enzyme ramC is transcribed. Surfactin, a B.subtilis cyclic lipopeptide antibiotic which prevents aerial hyphae formation in S.coelicolor, decreases localization of RamS precursor protein to the cell membrane, suggesting that processing only occurs at the cell membrane.

The protein resides in the cell membrane. The protein localises to the secreted. It localises to the spore wall. Stably accumulated precursor of SapB. Its function is as follows. Lanthionine-containing peptide devoid of antibiotic properties. A surface active peptide involved in the efficient formation of aerial mycelium when cells are grown in rich media. Has an overlapping function with the surface-active chaplin proteins; chaplins are essential on minimal medium while on rich medium both chaplins and SapB are required for efficient aerial hyphae formation. Required under conditions of high osmolarity where it may change the physical properties of the chaplin layer to allow hyphae to grow into air. Suggested to self-assemble at air-water interfaces, thus providing a film of surfactant through which nascent aerial hyphae can emerge; the aerial hyphae differentiate further into spores. Application to bald mutants (bld, unable to make aerial hyphae) restores hyphae growth. Application to chaplin negative mutants as well as ramC-ramS-ramA-ramB and ramR deletions also restores aerial hyphae growth and sporulation. Reduces surface tension of water from 72 to 30 mJ/m(2). In Streptomyces coelicolor (strain ATCC BAA-471 / A3(2) / M145), this protein is Lanthionine-containing peptide SapB precursor RamS (ramS).